The primary structure comprises 89 residues: NAD(P)H-quinone oxidoreductase subunit L (89 aa).

A run of 2 helical transmembrane segments spans residues 29 to 46 (VLGG…FYWM) and 59 to 79 (LFIY…APFL).

Belongs to the complex I NdhL subunit family. As to quaternary structure, NDH-1 can be composed of about 15 different subunits; different subcomplexes with different compositions have been identified which probably have different functions.

Its subcellular location is the cellular thylakoid membrane. It catalyses the reaction a plastoquinone + NADH + (n+1) H(+)(in) = a plastoquinol + NAD(+) + n H(+)(out). The catalysed reaction is a plastoquinone + NADPH + (n+1) H(+)(in) = a plastoquinol + NADP(+) + n H(+)(out). Functionally, NDH-1 shuttles electrons from an unknown electron donor, via FMN and iron-sulfur (Fe-S) centers, to quinones in the respiratory and/or the photosynthetic chain. The immediate electron acceptor for the enzyme in this species is believed to be plastoquinone. Couples the redox reaction to proton translocation, and thus conserves the redox energy in a proton gradient. Cyanobacterial NDH-1 also plays a role in inorganic carbon-concentration. The sequence is that of NAD(P)H-quinone oxidoreductase subunit L from Prochlorococcus marinus (strain NATL1A).